A 192-amino-acid chain; its full sequence is Probable molybdenum cofactor guanylyltransferase (192 aa).

GTP contacts are provided by residues 8–10 (LAG), lysine 20, aspartate 69, and aspartate 94. Position 94 (aspartate 94) interacts with Mg(2+).

This sequence belongs to the MobA family. Mg(2+) serves as cofactor.

It localises to the cytoplasm. The enzyme catalyses Mo-molybdopterin + GTP + H(+) = Mo-molybdopterin guanine dinucleotide + diphosphate. Functionally, transfers a GMP moiety from GTP to Mo-molybdopterin (Mo-MPT) cofactor (Moco or molybdenum cofactor) to form Mo-molybdopterin guanine dinucleotide (Mo-MGD) cofactor. The protein is Probable molybdenum cofactor guanylyltransferase of Pyrococcus horikoshii (strain ATCC 700860 / DSM 12428 / JCM 9974 / NBRC 100139 / OT-3).